Here is a 243-residue protein sequence, read N- to C-terminus: Urease accessory protein UreF 2 (243 aa).

Belongs to the UreF family. In terms of assembly, ureD, UreF and UreG form a complex that acts as a GTP-hydrolysis-dependent molecular chaperone, activating the urease apoprotein by helping to assemble the nickel containing metallocenter of UreC. The UreE protein probably delivers the nickel.

It localises to the cytoplasm. In terms of biological role, required for maturation of urease via the functional incorporation of the urease nickel metallocenter. Its function is as follows. Disrupting the ure2 operon has no effect on urease activity or pathogen survival in BALB/c mice when administered orally. This is Urease accessory protein UreF 2 from Brucella abortus (strain 2308).